A 397-amino-acid chain; its full sequence is Argininosuccinate synthase (397 aa).

9-17 (AYSGGLDTS) contacts ATP. Y87 is a binding site for L-citrulline. G117 serves as a coordination point for ATP. L-aspartate is bound by residues T119, N123, and D124. N123 contacts L-citrulline. 5 residues coordinate L-citrulline: R127, S175, S184, E260, and Y272.

Belongs to the argininosuccinate synthase family. Type 1 subfamily. Homotetramer.

It is found in the cytoplasm. The enzyme catalyses L-citrulline + L-aspartate + ATP = 2-(N(omega)-L-arginino)succinate + AMP + diphosphate + H(+). Its pathway is amino-acid biosynthesis; L-arginine biosynthesis; L-arginine from L-ornithine and carbamoyl phosphate: step 2/3. The chain is Argininosuccinate synthase from Methanococcus maripaludis (strain DSM 14266 / JCM 13030 / NBRC 101832 / S2 / LL).